Here is a 446-residue protein sequence, read N- to C-terminus: MENILDLWNKALQKIETKLSKPSFETWMKSTKAHSLQGDTLTITAPNEFARDWLESRYLHLIADTIYELTGEELSIKFIIPQNQDEVEAMPKSPIKKMSKEDPVDIPQNMLNPKYTFDTFVIGSGNRFAHAASLAVAEAPAKAYNPLFIYGGVGLGKTHLMHAIGHYVIDHNPSAKVVYLSSEKFTNEFINSIRDNKAVDFRNRYRNVDVLLIDDIQFLAGKEQTQEEFFHTFNTLHEESKQIVISSDRPPKEIPTLEDRLRSRFEWGLITDITPPDLETRIAILRKKAKAEGLDIPNEVMLYIANQIDSNIRELEGALIRVVAYSSLINKDINADLAAEALKDIIPSSKPRVITIKDIQRIVGQQFNIRLEDFKAKKRTKSVAYPRQIAMYLSREMTDSSLPKIGEEFGGRDHTTVIHAHEKISKLMVEDEQLQQHVKEIKEQLK.

The interval 1–72 is domain I, interacts with DnaA modulators; the sequence is MENILDLWNK…ADTIYELTGE (72 aa). Residues 72-109 are domain II; it reads EELSIKFIIPQNQDEVEAMPKSPIKKMSKEDPVDIPQN. A domain III, AAA+ region region spans residues 110–326; that stretch reads MLNPKYTFDT…GALIRVVAYS (217 aa). Glycine 154, glycine 156, lysine 157, and threonine 158 together coordinate ATP. The domain IV, binds dsDNA stretch occupies residues 327 to 446; that stretch reads SLINKDINAD…HVKEIKEQLK (120 aa).

It belongs to the DnaA family. In terms of assembly, oligomerizes as a right-handed, spiral filament on DNA at oriC.

It localises to the cytoplasm. Plays an essential role in the initiation and regulation of chromosomal replication. ATP-DnaA binds to the origin of replication (oriC) to initiate formation of the DNA replication initiation complex once per cell cycle. Binds the DnaA box (a 9 base pair repeat at the origin) and separates the double-stranded (ds)DNA. Forms a right-handed helical filament on oriC DNA; dsDNA binds to the exterior of the filament while single-stranded (ss)DNA is stabiized in the filament's interior. The ATP-DnaA-oriC complex binds and stabilizes one strand of the AT-rich DNA unwinding element (DUE), permitting loading of DNA polymerase. After initiation quickly degrades to an ADP-DnaA complex that is not apt for DNA replication. Binds acidic phospholipids. The polypeptide is Chromosomal replication initiator protein DnaA (Bacillus pumilus (strain SAFR-032)).